Reading from the N-terminus, the 323-residue chain is Formimidoylglutamase (323 aa).

Residues His131, Asp157, His159, Asp161, Cys245, and Asp247 each coordinate Mn(2+).

It belongs to the arginase family. It depends on Mn(2+) as a cofactor.

The catalysed reaction is N-formimidoyl-L-glutamate + H2O = formamide + L-glutamate. It functions in the pathway amino-acid degradation; L-histidine degradation into L-glutamate; L-glutamate from N-formimidoyl-L-glutamate (hydrolase route): step 1/1. Its function is as follows. Catalyzes the conversion of N-formimidoyl-L-glutamate to L-glutamate and formamide. The chain is Formimidoylglutamase from Geobacillus kaustophilus (strain HTA426).